The chain runs to 391 residues: GTPase Obg (391 aa).

One can recognise an Obg domain in the interval methionine 1–leucine 159. The OBG-type G domain maps to alanine 160–glutamate 333. GTP is bound by residues glycine 166 to serine 173, phenylalanine 191 to valine 195, aspartate 213 to glycine 216, asparagine 283 to aspartate 286, and serine 314 to alanine 316. Mg(2+) is bound by residues serine 173 and threonine 193.

This sequence belongs to the TRAFAC class OBG-HflX-like GTPase superfamily. OBG GTPase family. In terms of assembly, monomer. It depends on Mg(2+) as a cofactor.

It is found in the cytoplasm. Functionally, an essential GTPase which binds GTP, GDP and possibly (p)ppGpp with moderate affinity, with high nucleotide exchange rates and a fairly low GTP hydrolysis rate. Plays a role in control of the cell cycle, stress response, ribosome biogenesis and in those bacteria that undergo differentiation, in morphogenesis control. This Actinobacillus pleuropneumoniae serotype 7 (strain AP76) protein is GTPase Obg.